The chain runs to 130 residues: Small ribosomal subunit protein uS9 (130 aa).

The tract at residues 102–130 (GLLTRDSRMKERKKPGLKGARRAPQFSKR) is disordered. Basic residues predominate over residues 111–130 (KERKKPGLKGARRAPQFSKR).

This sequence belongs to the universal ribosomal protein uS9 family.

This Listeria monocytogenes serovar 1/2a (strain ATCC BAA-679 / EGD-e) protein is Small ribosomal subunit protein uS9.